The primary structure comprises 356 residues: Inactive ubiquitin thioesterase OTULINL (356 aa).

A disordered region spans residues Met-1–Gly-22. The required for membrane binding stretch occupies residues Met-1–Lys-83. The OTU domain occupies Lys-128–Phe-356.

This sequence belongs to the peptidase C65 family. Otulin subfamily. In terms of assembly, does not bind ubiquitin or ubiquitin-like proteins.

The protein localises to the cytoplasm. Its subcellular location is the endoplasmic reticulum membrane. The protein resides in the nucleus envelope. In terms of biological role, lacks deubiquitinase activity. This Homo sapiens (Human) protein is Inactive ubiquitin thioesterase OTULINL.